The following is a 180-amino-acid chain: Inner membrane-spanning protein YciB (180 aa).

Helical transmembrane passes span leucine 4–isoleucine 24, glutamine 25–isoleucine 45, valine 49–isoleucine 69, isoleucine 76–isoleucine 96, isoleucine 118–valine 138, and phenylalanine 150–leucine 170.

Belongs to the YciB family.

It is found in the cell inner membrane. Plays a role in cell envelope biogenesis, maintenance of cell envelope integrity and membrane homeostasis. This chain is Inner membrane-spanning protein YciB, found in Rickettsia typhi (strain ATCC VR-144 / Wilmington).